A 346-amino-acid polypeptide reads, in one-letter code: MAEITAKLVKELREKSGAGVMDAKKALVETDGDIEKAIELLREKGMAKAAKKADRVAAEGLTGVYVNGNVAAVIEVNAETDFVAKNAQFVELVNTTAKVIAEGKPANNEEALALIMPSGETLEAAYVSATATIGEKISFRRFALIEKTDAQHFGAYQHNGGRIGVISVVEDGDEALAKQLSMHIAAMKPTVLSYKELDEQFVKDELAQLNHVIDQDNESRAMVNKPALPHLKYGSKAQLTDDVIAQAEADIKAELAAEGKPEKIWDKIIPGKMDRFMLDNTKVDQAYTLLAQVYIMDDSKTVEAYLESVNASVVEFARFEVGEGIEKAANDFEAEVAATMAAALNN.

The involved in Mg(2+) ion dislocation from EF-Tu stretch occupies residues 80 to 83 (TDFV).

This sequence belongs to the EF-Ts family.

It is found in the cytoplasm. Its function is as follows. Associates with the EF-Tu.GDP complex and induces the exchange of GDP to GTP. It remains bound to the aminoacyl-tRNA.EF-Tu.GTP complex up to the GTP hydrolysis stage on the ribosome. This is Elongation factor Ts from Streptococcus pneumoniae (strain 70585).